The following is a 308-amino-acid chain: Glutaminase 2 (308 aa).

Substrate-binding residues include Ser-66, Asn-117, Glu-161, Asn-168, Tyr-192, Tyr-244, and Val-262.

It belongs to the glutaminase family. In terms of assembly, homotetramer.

It carries out the reaction L-glutamine + H2O = L-glutamate + NH4(+). This chain is Glutaminase 2, found in Escherichia coli O157:H7.